A 434-amino-acid chain; its full sequence is Adenylosuccinate synthetase (434 aa).

GTP contacts are provided by residues 13 to 19 (GDEGKGK) and 41 to 43 (GHT). The Proton acceptor role is filled by D14. Residues D14 and G41 each coordinate Mg(2+). IMP is bound by residues 14–17 (DEGK), 39–42 (NAGH), T133, R147, Q228, T243, and R307. H42 functions as the Proton donor in the catalytic mechanism. 303-309 (STTGRKR) lines the substrate pocket. Residues R309, 335–337 (KID), and 417–419 (STG) each bind GTP.

The protein belongs to the adenylosuccinate synthetase family. Homodimer. The cofactor is Mg(2+).

The protein localises to the cytoplasm. The catalysed reaction is IMP + L-aspartate + GTP = N(6)-(1,2-dicarboxyethyl)-AMP + GDP + phosphate + 2 H(+). Its pathway is purine metabolism; AMP biosynthesis via de novo pathway; AMP from IMP: step 1/2. In terms of biological role, plays an important role in the de novo pathway of purine nucleotide biosynthesis. Catalyzes the first committed step in the biosynthesis of AMP from IMP. The protein is Adenylosuccinate synthetase of Wigglesworthia glossinidia brevipalpis.